A 299-amino-acid polypeptide reads, in one-letter code: MAEFPASLLILNGKSTDNLPLREAIMLLREEGMTIHVRVTWEKGDAARYVEEARKLGVATVIAGGGDGTINEVSTALIQCEGDDIPALGILPLGTANDFATSVRIPEALDKALKLAIAGDAIAIDMAQVNKQTCFINMATGGFGTRITTETPEKLKAALGGVSYIIHGLMRMDTLQPDRCEIRGENFHWQGDALVIGIGNGRQAGGGQQLCPNALINDGLLQLRIFTGDEILPALVSTLKSDEDNPNIIEGASSWFDIQAPHEITFNLDGEPLSGQNFHIEILPAALRCRLPPDCPLLR.

In terms of domain architecture, DAGKc spans 2–133; that stretch reads AEFPASLLIL…IDMAQVNKQT (132 aa). Residues threonine 40, 66-72, and threonine 95 each bind ATP; that span reads GDGTINE. Positions 215, 218, and 220 each coordinate Mg(2+). Glutamate 271 functions as the Proton acceptor in the catalytic mechanism.

The protein belongs to the diacylglycerol/lipid kinase family. YegS lipid kinase subfamily. Requires Mg(2+) as cofactor. It depends on Ca(2+) as a cofactor.

Its subcellular location is the cytoplasm. Its function is as follows. Probably phosphorylates lipids; the in vivo substrate is unknown. This Escherichia coli O17:K52:H18 (strain UMN026 / ExPEC) protein is Probable lipid kinase YegS.